We begin with the raw amino-acid sequence, 319 residues long: Beta-ketoacyl-[acyl-carrier-protein] synthase III (319 aa).

Residues C113 and H246 contribute to the active site. The segment at 247–251 (QANIR) is ACP-binding. Residue N276 is part of the active site.

It belongs to the thiolase-like superfamily. FabH family. Homodimer.

It is found in the cytoplasm. It carries out the reaction malonyl-[ACP] + acetyl-CoA + H(+) = 3-oxobutanoyl-[ACP] + CO2 + CoA. It functions in the pathway lipid metabolism; fatty acid biosynthesis. Its function is as follows. Catalyzes the condensation reaction of fatty acid synthesis by the addition to an acyl acceptor of two carbons from malonyl-ACP. Catalyzes the first condensation reaction which initiates fatty acid synthesis and may therefore play a role in governing the total rate of fatty acid production. Possesses both acetoacetyl-ACP synthase and acetyl transacylase activities. Its substrate specificity determines the biosynthesis of branched-chain and/or straight-chain of fatty acids. This is Beta-ketoacyl-[acyl-carrier-protein] synthase III from Ehrlichia chaffeensis (strain ATCC CRL-10679 / Arkansas).